Consider the following 132-residue polypeptide: Small ribosomal subunit protein uS8 (132 aa).

Belongs to the universal ribosomal protein uS8 family. Part of the 30S ribosomal subunit. Contacts proteins S5 and S12.

Its function is as follows. One of the primary rRNA binding proteins, it binds directly to 16S rRNA central domain where it helps coordinate assembly of the platform of the 30S subunit. This is Small ribosomal subunit protein uS8 from Stenotrophomonas maltophilia (strain K279a).